The sequence spans 136 residues: Large ribosomal subunit protein uL16 (136 aa).

Belongs to the universal ribosomal protein uL16 family. As to quaternary structure, part of the 50S ribosomal subunit.

Functionally, binds 23S rRNA and is also seen to make contacts with the A and possibly P site tRNAs. The polypeptide is Large ribosomal subunit protein uL16 (Shewanella loihica (strain ATCC BAA-1088 / PV-4)).